Consider the following 122-residue polypeptide: Serum amyloid A-1 protein (122 aa).

A signal peptide spans 1–18; it reads MKPFVAIIFCFLILGVDS. The important for amyloid formation stretch occupies residues 19 to 45; sequence QRWFQFMKEAGQGTRDMWRAYTDMREA. Residues 100–122 form a disordered region; the sequence is ANEWGRSGKDPNFFRPPGLPSKY.

The protein belongs to the SAA family. Homohexamer; dimer of trimers. Can form amyloid fibrils after partial proteolysis; the native, undenatured protein does not form amyloid fibrils (in vitro). Apolipoprotein of the HDL complex. Binds to heparin. As to expression, detected in liver, spleen and kidney.

It localises to the secreted. Its function is as follows. Major acute phase protein. This chain is Serum amyloid A-1 protein (SAA1), found in Mesocricetus auratus (Golden hamster).